A 156-amino-acid polypeptide reads, in one-letter code: Arginine repressor (156 aa).

Belongs to the ArgR family.

Its subcellular location is the cytoplasm. Its pathway is amino-acid biosynthesis; L-arginine biosynthesis [regulation]. In terms of biological role, regulates arginine biosynthesis genes. The sequence is that of Arginine repressor from Salmonella agona (strain SL483).